We begin with the raw amino-acid sequence, 726 residues long: F-box protein COS111 (726 aa).

The 52-residue stretch at F143–T194 folds into the F-box domain. The interval R276–H295 is disordered. Low complexity predominate over residues D284–H295.

F-box protein probably involved in ubiquitin conjugation pathway. The protein is F-box protein COS111 (COS111) of Kluyveromyces lactis (strain ATCC 8585 / CBS 2359 / DSM 70799 / NBRC 1267 / NRRL Y-1140 / WM37) (Yeast).